The primary structure comprises 158 residues: NAD(P)H-quinone oxidoreductase subunit J, chloroplastic (158 aa).

The protein belongs to the complex I 30 kDa subunit family. In terms of assembly, NDH is composed of at least 16 different subunits, 5 of which are encoded in the nucleus.

The protein resides in the plastid. The protein localises to the chloroplast thylakoid membrane. It catalyses the reaction a plastoquinone + NADH + (n+1) H(+)(in) = a plastoquinol + NAD(+) + n H(+)(out). The enzyme catalyses a plastoquinone + NADPH + (n+1) H(+)(in) = a plastoquinol + NADP(+) + n H(+)(out). Functionally, NDH shuttles electrons from NAD(P)H:plastoquinone, via FMN and iron-sulfur (Fe-S) centers, to quinones in the photosynthetic chain and possibly in a chloroplast respiratory chain. The immediate electron acceptor for the enzyme in this species is believed to be plastoquinone. Couples the redox reaction to proton translocation, and thus conserves the redox energy in a proton gradient. This chain is NAD(P)H-quinone oxidoreductase subunit J, chloroplastic, found in Pelargonium hortorum (Common geranium).